The sequence spans 300 residues: Regulatory protein NocR (300 aa).

Residues 1–59 (MIQSRQLEAFRPVMLTGGMTSAANLVRITQPAISRLIRDLEEEIGISLFERTGNRLRPT) form the HTH lysR-type domain. Residues 19-38 (MTSAANLVRITQPAISRLIR) constitute a DNA-binding region (H-T-H motif).

It belongs to the LysR transcriptional regulatory family.

Its function is as follows. Positive regulatory protein for the noc operon involved in nopaline catabolism and uptake. The chain is Regulatory protein NocR (nocR) from Agrobacterium tumefaciens (strain T37).